Reading from the N-terminus, the 103-residue chain is Hexon-interlacing protein (103 aa).

The stretch at 72-99 (LDELKIQVAAMQNSVTAIQREVNDLKQR) forms a coiled coil.

This sequence belongs to the adenoviridae hexon-interlacing protein family. In terms of assembly, homotrimer. Interacts with hexon protein; this interaction tethers the hexons together. Self-interacts with adjacent proteins. Interacts with kinesin light chain KLC1; this interaction leads to capsid disruption at the nuclear pore complex during virus entry into host cell.

It localises to the virion. Its subcellular location is the host nucleus. Functionally, structural component of the virion that acts as a cement protein on the capsid exterior and forms triskelion structures consisting of three molecules that stabilize three hexon trimers at the center of each icosahedral facet and fixes the peripentonal hexons. Dispensable for assembly. During virus entry, recruits the anterograde motor kinesin-1 to the capsid docked at the nuclear pore complex thereby subjecting the docked capsid to a pulling force. The resulting tension leads to capsid disruption, dispersion of capsid fragments toward cell periphery and eventually viral DNA entry into the host nucleus. The chain is Hexon-interlacing protein from Canis lupus familiaris (Dog).